We begin with the raw amino-acid sequence, 226 residues long: Ribonuclease 3 (226 aa).

Residues 6-128 enclose the RNase III domain; sequence INRLQRKLGY…LIGGVFLDSD (123 aa). E41 contributes to the Mg(2+) binding site. D45 is an active-site residue. Mg(2+)-binding residues include D114 and E117. The active site involves E117. One can recognise a DRBM domain in the interval 155–225; sequence DPKTRLQEYL…AEQALKKLEL (71 aa).

The protein belongs to the ribonuclease III family. As to quaternary structure, homodimer. Mg(2+) serves as cofactor.

It localises to the cytoplasm. The enzyme catalyses Endonucleolytic cleavage to 5'-phosphomonoester.. Digests double-stranded RNA. Involved in the processing of primary rRNA transcript to yield the immediate precursors to the large and small rRNAs (23S and 16S). Processes some mRNAs, and tRNAs when they are encoded in the rRNA operon. Processes pre-crRNA and tracrRNA of type II CRISPR loci if present in the organism. This Escherichia coli O139:H28 (strain E24377A / ETEC) protein is Ribonuclease 3.